A 149-amino-acid chain; its full sequence is Deoxyuridine 5'-triphosphate nucleotidohydrolase (149 aa).

Substrate-binding positions include 68 to 70 (RSG), N81, 85 to 87 (LID), and M95.

It belongs to the dUTPase family. The cofactor is Mg(2+).

It carries out the reaction dUTP + H2O = dUMP + diphosphate + H(+). It participates in pyrimidine metabolism; dUMP biosynthesis; dUMP from dCTP (dUTP route): step 2/2. In terms of biological role, this enzyme is involved in nucleotide metabolism: it produces dUMP, the immediate precursor of thymidine nucleotides and it decreases the intracellular concentration of dUTP so that uracil cannot be incorporated into DNA. The chain is Deoxyuridine 5'-triphosphate nucleotidohydrolase from Albidiferax ferrireducens (strain ATCC BAA-621 / DSM 15236 / T118) (Rhodoferax ferrireducens).